The following is a 444-amino-acid chain: NAD-capped RNA hydrolase NUDT12 (444 aa).

ANK repeat units lie at residues 11 to 40 and 60 to 80; these read EIISQFHYSAAEGDIAKLTAILSHSPSLLN and SRQTALDIAKFWGYKHIANLL. N6-succinyllysine is present on lysine 167. Zn(2+)-binding residues include cysteine 266 and cysteine 269. Lysine 274 carries the N6-succinyllysine modification. Residues cysteine 284 and cysteine 289 each contribute to the Zn(2+) site. Residues tyrosine 300, 336–338, glutamate 352, glutamate 356, and glutamate 397 contribute to the substrate site; that span reads AGF. The Nudix hydrolase domain occupies 301–435; sequence PRVDPVVIMQ…SRAIAHQLIK (135 aa). 4 residues coordinate Mg(2+): alanine 336, glutamate 352, glutamate 356, and glutamate 397. Positions 337–358 match the Nudix box motif; sequence GFIEPGETIEDAVRREVEEESG. Residues 442–444 carry the Microbody targeting signal motif; sequence PNL.

Belongs to the Nudix hydrolase family. NudC subfamily. In terms of assembly, homodimer. Homodimerization is essential for its catalytic activity and protein stability. Interacts (via ANK repeats) with BLMH. Requires Mg(2+) as cofactor. Zn(2+) is required as a cofactor.

It localises to the cytoplasm. The protein resides in the peroxisome. Its subcellular location is the cytoplasmic granule. It catalyses the reaction a 5'-end NAD(+)-phospho-ribonucleoside in mRNA + H2O = a 5'-end phospho-adenosine-phospho-ribonucleoside in mRNA + beta-nicotinamide D-ribonucleotide + 2 H(+). The enzyme catalyses NAD(+) + H2O = beta-nicotinamide D-ribonucleotide + AMP + 2 H(+). The catalysed reaction is NADH + H2O = reduced beta-nicotinamide D-ribonucleotide + AMP + 2 H(+). It carries out the reaction NADPH + H2O = reduced beta-nicotinamide D-ribonucleotide + adenosine 2',5'-bisphosphate + 2 H(+). Its function is as follows. mRNA decapping enzyme that specifically removes the nicotinamide adenine dinucleotide (NAD) cap from a subset of mRNAs by hydrolyzing the diphosphate linkage to produce nicotinamide mononucleotide (NMN) and 5' monophosphate mRNA. The NAD-cap is present at the 5'-end of some RNAs; in contrast to the canonical N7 methylguanosine (m7G) cap, the NAD cap promotes mRNA decay. Preferentially acts on NAD-capped transcripts in response to nutrient stress. Also acts on free nicotinamide adenine dinucleotide molecules: hydrolyzes NAD(H) into NMN(H) and AMP, and NADPH into NMNH and 2',5'-ADP. May act to regulate the concentration of peroxisomal nicotinamide nucleotide cofactors required for oxidative metabolism in this organelle. Regulates the levels of circadian clock components PER1, PER2, PER3 and CRY2 in the liver. This Bos taurus (Bovine) protein is NAD-capped RNA hydrolase NUDT12.